The following is a 583-amino-acid chain: Phosphoglucomutase, cytoplasmic 2 (583 aa).

Arginine 25 and serine 124 together coordinate alpha-D-glucose 1,6-bisphosphate. The Phosphoserine intermediate role is filled by serine 124. Mg(2+)-binding residues include serine 124, aspartate 300, aspartate 302, and aspartate 304. Serine 124 is modified (phosphoserine). Residues aspartate 304, arginine 305, threonine 368, glutamate 387, serine 389, and lysine 400 each coordinate alpha-D-glucose 1,6-bisphosphate.

Belongs to the phosphohexose mutase family. Monomer. Mg(2+) is required as a cofactor.

The protein localises to the cytoplasm. The catalysed reaction is alpha-D-glucose 1-phosphate = alpha-D-glucose 6-phosphate. The enzyme catalyses O-phospho-L-seryl-[protein] + alpha-D-glucose 1-phosphate = alpha-D-glucose 1,6-bisphosphate + L-seryl-[protein]. It carries out the reaction alpha-D-glucose 1,6-bisphosphate + L-seryl-[protein] = O-phospho-L-seryl-[protein] + alpha-D-glucose 6-phosphate. Catalyzes the reversible isomerization of alpha-D-glucose 1-phosphate to alpha-D-glucose 6-phosphate. The mechanism proceeds via the intermediate compound alpha-D-glucose 1,6-bisphosphate. This enzyme participates in both the breakdown and synthesis of glucose. This Zea mays (Maize) protein is Phosphoglucomutase, cytoplasmic 2.